Here is a 641-residue protein sequence, read N- to C-terminus: Sodium-dependent nutrient amino acid transporter 1 (641 aa).

The interval Met-1–Arg-38 is disordered. Topologically, residues Met-1–Asn-40 are cytoplasmic. Positions Ser-9–Thr-26 are enriched in low complexity. A compositionally biased stretch (basic and acidic residues) spans Glu-27–Ala-36. 3 consecutive transmembrane segments (helical) span residues Trp-41–Val-61, Gly-74–Leu-94, and Ser-111–Ile-131. Residues Asn-185 and Asn-190 are each glycosylated (N-linked (GlcNAc...) asparagine). A run of 9 helical transmembrane segments spans residues Pro-229–Met-249, Ala-258–Val-278, Ala-307–Ser-327, Ile-341–Leu-361, Leu-401–Leu-421, Val-447–Leu-467, Thr-474–Leu-494, Cys-516–Ile-536, and Ile-552–Tyr-572.

The protein belongs to the sodium:neurotransmitter symporter (SNF) (TC 2.A.22) family. As to expression, in larvae, weak specific expression in the anterior midgut just proximal to the gastric caeca reproductive rudiments, common ureters of the Malpighian tubules, and distal swollen portion of the anterior pair of Malpighian tubules. Expression is also seen in the imaginal disks of the head; brain hemispheres and the ventral ganglion. Stronger expression in the posterior midgut.

The protein resides in the membrane. Unusual broad substrate spectrum amino acid:sodium cotransporter that promotes absorption of the D isomers of essential amino acids. Neutral amino acids are the preferred substrates, especially methionine and phenylalanine. The sequence is that of Sodium-dependent nutrient amino acid transporter 1 (NAAT1) from Drosophila melanogaster (Fruit fly).